The sequence spans 211 residues: Thiamine-phosphate synthase (211 aa).

4-amino-2-methyl-5-(diphosphooxymethyl)pyrimidine contacts are provided by residues 37 to 41 and Asn-69; that span reads QYRDK. Mg(2+)-binding residues include Asp-70 and Asp-89. Ser-108 contributes to the 4-amino-2-methyl-5-(diphosphooxymethyl)pyrimidine binding site. 135-137 provides a ligand contact to 2-[(2R,5Z)-2-carboxy-4-methylthiazol-5(2H)-ylidene]ethyl phosphate; the sequence is SPT. Lys-138 is a 4-amino-2-methyl-5-(diphosphooxymethyl)pyrimidine binding site. Residues Gly-165 and 185-186 each bind 2-[(2R,5Z)-2-carboxy-4-methylthiazol-5(2H)-ylidene]ethyl phosphate; that span reads LS.

The protein belongs to the thiamine-phosphate synthase family. It depends on Mg(2+) as a cofactor.

It carries out the reaction 2-[(2R,5Z)-2-carboxy-4-methylthiazol-5(2H)-ylidene]ethyl phosphate + 4-amino-2-methyl-5-(diphosphooxymethyl)pyrimidine + 2 H(+) = thiamine phosphate + CO2 + diphosphate. The catalysed reaction is 2-(2-carboxy-4-methylthiazol-5-yl)ethyl phosphate + 4-amino-2-methyl-5-(diphosphooxymethyl)pyrimidine + 2 H(+) = thiamine phosphate + CO2 + diphosphate. The enzyme catalyses 4-methyl-5-(2-phosphooxyethyl)-thiazole + 4-amino-2-methyl-5-(diphosphooxymethyl)pyrimidine + H(+) = thiamine phosphate + diphosphate. Its pathway is cofactor biosynthesis; thiamine diphosphate biosynthesis; thiamine phosphate from 4-amino-2-methyl-5-diphosphomethylpyrimidine and 4-methyl-5-(2-phosphoethyl)-thiazole: step 1/1. Its function is as follows. Condenses 4-methyl-5-(beta-hydroxyethyl)thiazole monophosphate (THZ-P) and 2-methyl-4-amino-5-hydroxymethyl pyrimidine pyrophosphate (HMP-PP) to form thiamine monophosphate (TMP). The polypeptide is Thiamine-phosphate synthase (Thiobacillus denitrificans (strain ATCC 25259 / T1)).